The chain runs to 184 residues: Ribosome-recycling factor (184 aa).

This sequence belongs to the RRF family.

It is found in the cytoplasm. Functionally, responsible for the release of ribosomes from messenger RNA at the termination of protein biosynthesis. May increase the efficiency of translation by recycling ribosomes from one round of translation to another. The polypeptide is Ribosome-recycling factor (Borrelia garinii subsp. bavariensis (strain ATCC BAA-2496 / DSM 23469 / PBi) (Borreliella bavariensis)).